A 367-amino-acid polypeptide reads, in one-letter code: Serine/threonine-protein phosphatase 2A activator 2 (367 aa).

It belongs to the PTPA-type PPIase family.

The protein resides in the cytoplasm. It catalyses the reaction [protein]-peptidylproline (omega=180) = [protein]-peptidylproline (omega=0). PPIases accelerate the folding of proteins. It catalyzes the cis-trans isomerization of proline imidic peptide bonds in oligopeptides. Acts as a regulatory subunit for PP2A-like phosphatases modulating their activity or substrate specificity, probably by inducing a conformational change in the catalytic subunit, a direct target of the PPIase. Can reactivate inactive phosphatase PP2A-phosphatase methylesterase complexes (PP2Ai) in presence of ATP and Mg(2+) by dissociating the inactive form from the complex. In Debaryomyces hansenii (strain ATCC 36239 / CBS 767 / BCRC 21394 / JCM 1990 / NBRC 0083 / IGC 2968) (Yeast), this protein is Serine/threonine-protein phosphatase 2A activator 2 (RRD2).